Reading from the N-terminus, the 271-residue chain is MAFSPAHRLLARLGSTSIYKRVWRYWYPLMTRGLGADKIAFLNWAYEEDPPIDLTLEVSDEPNRDHINMYHRTATHVELSGKRVLEVSCGHGGGASYLTRTLHPASYTGLDLNRAGIKLCQRRHNLPGLDFVRGDAENLPFEDESFDVVLKVEASHCYPHFSRFLAEVVRVLRPGGYLLYTDLRPSNEIAEWEADLAGSPLRQLSQREINAEVVRGIEKNSHTSRVLVDRNLPAFLRFADRAVGRQLSRYLEGGELSYRMYCFTKDFAASR.

Belongs to the methyltransferase superfamily. Phthiotriol/phenolphthiotriol dimycocerosates methyltransferase family.

Catalyzes the methylation of the lipid moiety of the intermediate compounds phthiotriol and glycosylated phenolphthiotriol dimycoserosates to form phthiocerol dimycocerosates (DIM A) and glycosylated phenolphthiocerol dimycocerosates (PGL). The chain is Phthiotriol/phenolphthiotriol dimycocerosates methyltransferase 1 from Mycobacterium ulcerans (strain Agy99).